The sequence spans 660 residues: Acetyl-coenzyme A synthetase (660 aa).

CoA-binding positions include 197 to 200 and Thr317; that span reads RGGK. Residues 397 to 399, 421 to 426, Asp512, and Arg528 each bind ATP; these read GEP and DTFWQT. Ser536 contributes to the CoA binding site. Arg539 contributes to the ATP binding site. The Mg(2+) site is built by Val550 and Val555. Lys625 carries the post-translational modification N6-acetyllysine.

This sequence belongs to the ATP-dependent AMP-binding enzyme family. Requires Mg(2+) as cofactor. Post-translationally, acetylated. Deacetylation by the SIR2-homolog deacetylase activates the enzyme.

The enzyme catalyses acetate + ATP + CoA = acetyl-CoA + AMP + diphosphate. In terms of biological role, catalyzes the conversion of acetate into acetyl-CoA (AcCoA), an essential intermediate at the junction of anabolic and catabolic pathways. AcsA undergoes a two-step reaction. In the first half reaction, AcsA combines acetate with ATP to form acetyl-adenylate (AcAMP) intermediate. In the second half reaction, it can then transfer the acetyl group from AcAMP to the sulfhydryl group of CoA, forming the product AcCoA. This Cupriavidus metallidurans (strain ATCC 43123 / DSM 2839 / NBRC 102507 / CH34) (Ralstonia metallidurans) protein is Acetyl-coenzyme A synthetase.